The sequence spans 52 residues: U-scutigerotoxin(01)-Tl1a (52 aa).

Residues M1–A25 form the signal peptide.

This sequence belongs to the scutigerotoxin-01 family. In terms of processing, contains 1 disulfide bond. In terms of tissue distribution, expressed by the venom gland.

It is found in the secreted. This is U-scutigerotoxin(01)-Tl1a from Thereuopoda longicornis (Long-legged centipede).